Reading from the N-terminus, the 147-residue chain is MVHLTGEEKAAVTGLWSKVNVDEVGGEALGRLLVVYPWTQRFFDSFGDLSTPDAVMNNPKVKAHGKKVLNSFSEGLKNLDNLKGTFAKLSELHCDKLHVDPENFKLLGNVLVCVLAHHFGKEFTPQVQAAYQKVVAGVANALAHKYH.

The residue at position 2 (Val-2) is an N-acetylvaline. Residues 3 to 147 (HLTGEEKAAV…VANALAHKYH (145 aa)) enclose the Globin domain. Thr-13 carries the post-translational modification Phosphothreonine. Residue Ser-45 is modified to Phosphoserine. An N6-acetyllysine modification is found at Lys-60. A heme b-binding site is contributed by His-64. At Lys-83 the chain carries N6-acetyllysine. A heme b-binding site is contributed by His-93. Residue Cys-94 is modified to S-nitrosocysteine. Lys-145 bears the N6-acetyllysine mark.

It belongs to the globin family. In terms of assembly, heterotetramer of two alpha chains and two beta chains. Red blood cells.

Functionally, involved in oxygen transport from the lung to the various peripheral tissues. This is Hemoglobin subunit beta (HBB) from Ailuropoda melanoleuca (Giant panda).